A 200-amino-acid chain; its full sequence is ATP-dependent Clp protease proteolytic subunit (200 aa).

The active-site Nucleophile is the S101. The active site involves H126.

Belongs to the peptidase S14 family. As to quaternary structure, component of the chloroplastic Clp protease core complex.

It localises to the plastid. The protein localises to the chloroplast stroma. It catalyses the reaction Hydrolysis of proteins to small peptides in the presence of ATP and magnesium. alpha-casein is the usual test substrate. In the absence of ATP, only oligopeptides shorter than five residues are hydrolyzed (such as succinyl-Leu-Tyr-|-NHMec, and Leu-Tyr-Leu-|-Tyr-Trp, in which cleavage of the -Tyr-|-Leu- and -Tyr-|-Trp bonds also occurs).. Functionally, cleaves peptides in various proteins in a process that requires ATP hydrolysis. Has a chymotrypsin-like activity. Plays a major role in the degradation of misfolded proteins. The polypeptide is ATP-dependent Clp protease proteolytic subunit (Adiantum capillus-veneris (Maidenhair fern)).